Consider the following 35-residue polypeptide: Tamulustoxin (35 aa).

3 cysteine pairs are disulfide-bonded: cysteine 2/cysteine 22, cysteine 7/cysteine 31, and cysteine 11/cysteine 33.

In terms of tissue distribution, expressed by the venom gland.

The protein resides in the secreted. In terms of biological role, blocks Kv1.6/KCNA6 potassium channels. This chain is Tamulustoxin, found in Hottentotta tamulus (Eastern Indian scorpion).